The chain runs to 139 residues: ATP synthase epsilon chain (139 aa).

The protein belongs to the ATPase epsilon chain family. As to quaternary structure, F-type ATPases have 2 components, CF(1) - the catalytic core - and CF(0) - the membrane proton channel. CF(1) has five subunits: alpha(3), beta(3), gamma(1), delta(1), epsilon(1). CF(0) has three main subunits: a, b and c.

It is found in the cell inner membrane. In terms of biological role, produces ATP from ADP in the presence of a proton gradient across the membrane. This chain is ATP synthase epsilon chain, found in Actinobacillus pleuropneumoniae serotype 5b (strain L20).